The primary structure comprises 1042 residues: Sarcoplasmic/endoplasmic reticulum calcium ATPase 2 (1042 aa).

The Cytoplasmic portion of the chain corresponds to 1–48; sequence MENAHTKTVEEVLGHFGVNESTGLSLEQVKKLKERWGSNELPAEEGKT. At S38 the chain carries Phosphoserine. Residues 49–69 form a helical membrane-spanning segment; the sequence is LLELVIEQFEDLLVRILLLAA. The Lumenal portion of the chain corresponds to 70 to 89; sequence CISFVLAWFEEGEETITAFV. The chain crosses the membrane as a helical span at residues 90–110; the sequence is EPFVILLILVANAIVGVWQER. At 111 to 253 the chain is on the cytoplasmic side; sequence NAENAIEALK…QERTPLQQKL (143 aa). The chain crosses the membrane as a helical span at residues 254-273; sequence DEFGEQLSKVISLICIAVWI. At 274-295 the chain is on the lumenal side; that stretch reads INIGHFNDPVHGGSWIRGAIYY. A 3'-nitrotyrosine mark is found at Y294 and Y295. The helical transmembrane segment at 296–313 threads the bilayer; sequence FKIAVALAVAAIPEGLPA. Ca(2+)-binding residues include V304, A305, I307, and E309. Residues 314–756 are Cytoplasmic-facing; the sequence is VITTCLALGT…EEGRAIYNNM (443 aa). The 4-aspartylphosphate intermediate role is filled by D351. 2 residues coordinate Mg(2+): D351 and T353. T353 serves as a coordination point for ATP. T441 is modified (phosphothreonine). Positions 442, 489, and 514 each coordinate ATP. Residue S531 is modified to Phosphoserine. R559 contacts ATP. The segment at 575 to 594 is interaction with HAX1; it reads MHLKDSANFIKYETNLTFVG. A Phosphoserine modification is found at S580. Residues T624, G625, and D626 each contribute to the ATP site. Residue S663 is modified to Phosphoserine. ATP contacts are provided by R677 and K683. Residue D702 coordinates Mg(2+). N705 contributes to the ATP binding site. The chain crosses the membrane as a helical span at residues 757–776; it reads KQFIRYLISSNVGEVVCIFL. Positions 767 and 770 each coordinate Ca(2+). At 777–786 the chain is on the lumenal side; that stretch reads TAALGFPEAL. The chain crosses the membrane as a helical span at residues 787–807; that stretch reads IPVQLLWVNLVTDGLPATALG. The interval 787 to 807 is interaction with PLN; it reads IPVQLLWVNLVTDGLPATALG. Positions 788–1042 are interaction with TMEM64 and PDIA3; sequence PVQLLWVNLV…DTNFSDLLWS (255 aa). The Ca(2+) site is built by N795, T798, and D799. Topologically, residues 808–827 are cytoplasmic; that stretch reads FNPPDLDIMNKPPRNPKEPL. A helical membrane pass occupies residues 828-850; sequence ISGWLFFRYLAIGCYVGAATVGA. Residues 851–896 lie on the Lumenal side of the membrane; sequence AAWWFIAADGGPRVSFYQLSHFLQCKEDNPDFEGVDCAIFESPYPM. A disulfide bridge links C875 with C887. The helical transmembrane segment at 897–916 threads the bilayer; it reads TMALSVLVTIEMCNALNSLS. Ca(2+) is bound at residue E907. Residues 917–929 lie on the Cytoplasmic side of the membrane; the sequence is ENQSLLRMPPWEN. A helical transmembrane segment spans residues 930–948; it reads IWLVGSICLSMSLHFLILY. The interaction with PLN stretch occupies residues 931 to 942; the sequence is WLVGSICLSMSL. The Lumenal segment spans residues 949-963; it reads VEPLPLIFQITPLNV. Residues 964–984 traverse the membrane as a helical segment; it reads TQWLMVLKISLPVILMDETLK. Residues 985-1042 are Cytoplasmic-facing; it reads FVARNYLEPGKECVQPAPQSCSLWACTEGVSWPFVLLIVPLVMWVYSTDTNFSDLLWS.

The protein belongs to the cation transport ATPase (P-type) (TC 3.A.3) family. Type IIA subfamily. Interacts with sarcolipin (SLN); the interaction inhibits ATP2A2 Ca(2+) affinity. Interacts with phospholamban (PLN); the interaction inhibits ATP2A2 Ca(2+) affinity. Interacts with myoregulin (MRLN). Interacts with ARLN and ERLN; the interactions inhibit ATP2A2 Ca(2+) affinity. Interacts with SRTIT1/DWORF; the interaction results in activation of ATP2A2. Interacts with the monomeric forms of SLN, PLN, ARLN, ERLN and STRI1/DWORF. Interacts with HAX1. Interacts with S100A8 and S100A9. Interacts with SLC35G1 and STIM1. Interacts with TMEM203. Interacts with TMEM64 and PDIA3. Interacts with TMX1. Interacts with TMX2. Interacts with VMP1; VMP1 competes with PLN and SLN to prevent them from forming an inhibitory complex with ATP2A2. Interacts with ULK1. Interacts with TUNAR. Interacts with FLVCR2; this interaction occurs in the absence of heme and promotes ATP2A2 proteasomal degradation; this complex is dissociated upon heme binding. Interacts with FNIP1. As to quaternary structure, interacts with TRAM2 (via C-terminus). Mg(2+) serves as cofactor. Post-translationally, nitrated under oxidative stress. Nitration on the two tyrosine residues inhibits catalytic activity. Serotonylated on Gln residues by TGM2 in response to hypoxia, leading to its inactivation. Isoform 2 is highly expressed in heart and slow twitch skeletal muscle. Isoform 1 is widely expressed.

The protein localises to the endoplasmic reticulum membrane. It localises to the sarcoplasmic reticulum membrane. It catalyses the reaction Ca(2+)(in) + ATP + H2O = Ca(2+)(out) + ADP + phosphate + H(+). Its activity is regulated as follows. Has different conformational states with differential Ca2+ affinity. The E1 conformational state (active form) shows high Ca(2+) affinity, while the E2 state exhibits low Ca(2+) affinity. Binding of ATP allosterically increases its affinity for subsequent binding of Ca2+. Reversibly inhibited by phospholamban (PLN) at low calcium concentrations. PLN inhibits ATP2A2 Ca(2+) affinity by disrupting its allosteric activation by ATP. Inhibited by sarcolipin (SLN) and myoregulin (MRLN). The inhibition is blocked by VMP1. Enhanced by STRIT1/DWORF; STRIT1 increases activity by displacing sarcolipin (SLN), phospholamban (PLN) and myoregulin (MRLN). Stabilizes SERCA2 in its E2 state. Functionally, this magnesium-dependent enzyme catalyzes the hydrolysis of ATP coupled with the translocation of calcium from the cytosol to the sarcoplasmic reticulum lumen. Involved in autophagy in response to starvation. Upon interaction with VMP1 and activation, controls ER-isolation membrane contacts for autophagosome formation. Also modulates ER contacts with lipid droplets, mitochondria and endosomes. In coordination with FLVCR2 mediates heme-stimulated switching from mitochondrial ATP synthesis to thermogenesis. In terms of biological role, involved in the regulation of the contraction/relaxation cycle. Acts as a regulator of TNFSF11-mediated Ca(2+) signaling pathways via its interaction with TMEM64 which is critical for the TNFSF11-induced CREB1 activation and mitochondrial ROS generation necessary for proper osteoclast generation. Association between TMEM64 and SERCA2 in the ER leads to cytosolic Ca(2+) spiking for activation of NFATC1 and production of mitochondrial ROS, thereby triggering Ca(2+) signaling cascades that promote osteoclast differentiation and activation. The protein is Sarcoplasmic/endoplasmic reticulum calcium ATPase 2 (ATP2A2) of Oryctolagus cuniculus (Rabbit).